The sequence spans 1011 residues: DNA-directed RNA polymerase subunit beta'' (1011 aa).

Cys-216, Cys-282, Cys-288, and Cys-291 together coordinate Zn(2+).

Belongs to the RNA polymerase beta' chain family. RpoC2 subfamily. As to quaternary structure, in plastids the minimal PEP RNA polymerase catalytic core is composed of four subunits: alpha, beta, beta', and beta''. When a (nuclear-encoded) sigma factor is associated with the core the holoenzyme is formed, which can initiate transcription. Zn(2+) is required as a cofactor.

The protein localises to the plastid. The protein resides in the chloroplast. The enzyme catalyses RNA(n) + a ribonucleoside 5'-triphosphate = RNA(n+1) + diphosphate. DNA-dependent RNA polymerase catalyzes the transcription of DNA into RNA using the four ribonucleoside triphosphates as substrates. The protein is DNA-directed RNA polymerase subunit beta'' of Ostreococcus tauri.